Consider the following 211-residue polypeptide: Putative ankyrin repeat protein R810 (211 aa).

5 ANK repeats span residues 31–61 (TKFIKLYYLVKTHKSILKKIVKNGYFENLKY), 72–101 (NINDVLLLACKYGNLPIVKYLVSKGADICA), 103–131 (QNSPIKNATYYGHLDVVKYLVSNGAKFFG), 133–162 (YSSAIIIASSSGKLDIVKYFVPGKIYFCLE), and 163–191 (MEIALVCATENKHTNIVDYLNSMRSSYFD).

The sequence is that of Putative ankyrin repeat protein R810 from Acanthamoeba polyphaga mimivirus (APMV).